A 364-amino-acid polypeptide reads, in one-letter code: Lipoyl synthase, mitochondrial (364 aa).

The disordered stretch occupies residues proline 34–tyrosine 53. [4Fe-4S] cluster contacts are provided by cysteine 99, cysteine 104, cysteine 110, cysteine 130, cysteine 134, cysteine 137, and serine 345. The Radical SAM core domain occupies glutamate 115 to leucine 334.

This sequence belongs to the radical SAM superfamily. Lipoyl synthase family. Requires [4Fe-4S] cluster as cofactor.

It localises to the mitochondrion. It carries out the reaction [[Fe-S] cluster scaffold protein carrying a second [4Fe-4S](2+) cluster] + N(6)-octanoyl-L-lysyl-[protein] + 2 oxidized [2Fe-2S]-[ferredoxin] + 2 S-adenosyl-L-methionine + 4 H(+) = [[Fe-S] cluster scaffold protein] + N(6)-[(R)-dihydrolipoyl]-L-lysyl-[protein] + 4 Fe(3+) + 2 hydrogen sulfide + 2 5'-deoxyadenosine + 2 L-methionine + 2 reduced [2Fe-2S]-[ferredoxin]. The protein operates within protein modification; protein lipoylation via endogenous pathway; protein N(6)-(lipoyl)lysine from octanoyl-[acyl-carrier-protein]: step 2/2. Functionally, catalyzes the radical-mediated insertion of two sulfur atoms into the C-6 and C-8 positions of the octanoyl moiety bound to the lipoyl domains of lipoate-dependent enzymes, thereby converting the octanoylated domains into lipoylated derivatives. The protein is Lipoyl synthase, mitochondrial of Drosophila grimshawi (Hawaiian fruit fly).